We begin with the raw amino-acid sequence, 520 residues long: 3-phosphoshikimate 1-carboxyvinyltransferase, chloroplastic (520 aa).

A chloroplast-targeting transit peptide spans Met-1–Glu-76. Positions Leu-20–His-39 are disordered. 3-phosphoshikimate contacts are provided by Lys-99, Ser-100, and Arg-104. Lys-99 lines the phosphoenolpyruvate pocket. Phosphoenolpyruvate is bound by residues Gly-177 and Arg-207. Positions 254, 255, 256, 282, 407, and 434 each coordinate 3-phosphoshikimate. Position 256 (Gln-256) interacts with phosphoenolpyruvate. The Proton acceptor role is filled by Asp-407. The phosphoenolpyruvate site is built by Arg-438, Arg-480, and Lys-505.

It belongs to the EPSP synthase family.

It localises to the plastid. It is found in the chloroplast. The catalysed reaction is 3-phosphoshikimate + phosphoenolpyruvate = 5-O-(1-carboxyvinyl)-3-phosphoshikimate + phosphate. Its pathway is metabolic intermediate biosynthesis; chorismate biosynthesis; chorismate from D-erythrose 4-phosphate and phosphoenolpyruvate: step 6/7. Its function is as follows. Catalyzes the transfer of the enolpyruvyl moiety of phosphoenolpyruvate (PEP) to the 5-hydroxyl of shikimate-3-phosphate (S3P) to produce enolpyruvyl shikimate-3-phosphate and inorganic phosphate. The protein is 3-phosphoshikimate 1-carboxyvinyltransferase, chloroplastic of Arabidopsis thaliana (Mouse-ear cress).